A 522-amino-acid polypeptide reads, in one-letter code: ARS-binding protein 1 (522 aa).

The HTH CENPB-type domain occupies 70–144; it reads DVKRNRPPKY…RKRHILHAIN (75 aa). Phosphothreonine is present on Thr460.

Interacts with mcm10.

The protein resides in the nucleus. Its function is as follows. Binds, preferentially, to the Maundrell ARS consensus sequence within ARS3002. This Schizosaccharomyces pombe (strain 972 / ATCC 24843) (Fission yeast) protein is ARS-binding protein 1 (abp1).